The sequence spans 213 residues: Adenylate kinase (213 aa).

14 to 19 provides a ligand contact to ATP; that stretch reads GSGKGT. The interval 34 to 63 is NMP; it reads STGDLLRAIIREGTPNGLKAKAYLDKGAFV. Residues Thr-35, Arg-40, 61–63, 89–92, and Gln-96 each bind AMP; these read AFV and GFPR. The LID stretch occupies residues 129-162; sequence SRFLCPSCSRIYNTSQGHTECPDCHVPLIRRSDD. Arg-130 serves as a coordination point for ATP. Residues Cys-133 and Cys-136 each coordinate Zn(2+). 139–140 contributes to the ATP binding site; the sequence is IY. Positions 149 and 152 each coordinate Zn(2+). The AMP site is built by Arg-159 and Arg-170. Asn-198 provides a ligand contact to ATP.

The protein belongs to the adenylate kinase family. Monomer.

It is found in the cytoplasm. It catalyses the reaction AMP + ATP = 2 ADP. The protein operates within purine metabolism; AMP biosynthesis via salvage pathway; AMP from ADP: step 1/1. Functionally, catalyzes the reversible transfer of the terminal phosphate group between ATP and AMP. Plays an important role in cellular energy homeostasis and in adenine nucleotide metabolism. This is Adenylate kinase from Chlamydia pneumoniae (Chlamydophila pneumoniae).